The following is a 112-amino-acid chain: Ribosome-binding factor A (112 aa).

This sequence belongs to the RbfA family. Monomer. Binds 30S ribosomal subunits, but not 50S ribosomal subunits or 70S ribosomes.

The protein localises to the cytoplasm. One of several proteins that assist in the late maturation steps of the functional core of the 30S ribosomal subunit. Associates with free 30S ribosomal subunits (but not with 30S subunits that are part of 70S ribosomes or polysomes). Required for efficient processing of 16S rRNA. May interact with the 5'-terminal helix region of 16S rRNA. The sequence is that of Ribosome-binding factor A from Ruthia magnifica subsp. Calyptogena magnifica.